A 134-amino-acid chain; its full sequence is Large ribosomal subunit protein uL22 (134 aa).

It belongs to the universal ribosomal protein uL22 family. As to quaternary structure, part of the 50S ribosomal subunit.

In terms of biological role, this protein binds specifically to 23S rRNA; its binding is stimulated by other ribosomal proteins, e.g. L4, L17, and L20. It is important during the early stages of 50S assembly. It makes multiple contacts with different domains of the 23S rRNA in the assembled 50S subunit and ribosome. Functionally, the globular domain of the protein is located near the polypeptide exit tunnel on the outside of the subunit, while an extended beta-hairpin is found that lines the wall of the exit tunnel in the center of the 70S ribosome. The polypeptide is Large ribosomal subunit protein uL22 (Rhodococcus erythropolis (strain PR4 / NBRC 100887)).